A 169-amino-acid chain; its full sequence is NAD(P)H-quinone oxidoreductase subunit J, chloroplastic (169 aa).

The protein belongs to the complex I 30 kDa subunit family. As to quaternary structure, NDH is composed of at least 16 different subunits, 5 of which are encoded in the nucleus.

The protein localises to the plastid. Its subcellular location is the chloroplast thylakoid membrane. The catalysed reaction is a plastoquinone + NADH + (n+1) H(+)(in) = a plastoquinol + NAD(+) + n H(+)(out). It catalyses the reaction a plastoquinone + NADPH + (n+1) H(+)(in) = a plastoquinol + NADP(+) + n H(+)(out). Its function is as follows. NDH shuttles electrons from NAD(P)H:plastoquinone, via FMN and iron-sulfur (Fe-S) centers, to quinones in the photosynthetic chain and possibly in a chloroplast respiratory chain. The immediate electron acceptor for the enzyme in this species is believed to be plastoquinone. Couples the redox reaction to proton translocation, and thus conserves the redox energy in a proton gradient. In Zygnema circumcarinatum (Green alga), this protein is NAD(P)H-quinone oxidoreductase subunit J, chloroplastic.